The primary structure comprises 66 residues: Large ribosomal subunit protein uL29 (66 aa).

The protein belongs to the universal ribosomal protein uL29 family.

In Borrelia turicatae (strain 91E135), this protein is Large ribosomal subunit protein uL29.